The following is a 262-amino-acid chain: Expansin-A13 (262 aa).

The first 22 residues, 1–22, serve as a signal peptide directing secretion; that stretch reads MAGVARMLAAVVCAIMPAAAMA. In terms of domain architecture, Expansin-like EG45 spans 52–167; that stretch reads GGACGYGNLY…QRVPCMKKGG (116 aa). The 81-residue stretch at 177–257 folds into the Expansin-like CBD domain; sequence YFQLVLLTNV…GWRFGQTFAS (81 aa).

It belongs to the expansin family. Expansin A subfamily. As to expression, expressed in roots and flowers.

Its subcellular location is the secreted. It localises to the cell wall. The protein localises to the membrane. In terms of biological role, may cause loosening and extension of plant cell walls by disrupting non-covalent bonding between cellulose microfibrils and matrix glucans. No enzymatic activity has been found. May be required for rapid internodal elongation in deepwater rice during submergence. This chain is Expansin-A13 (EXPA13), found in Oryza sativa subsp. japonica (Rice).